We begin with the raw amino-acid sequence, 133 residues long: p53 and DNA damage-regulated protein 1 (133 aa).

Belongs to the prefoldin subunit beta family. Component of the PAQosome complex which is responsible for the biogenesis of several protein complexes and which consists of R2TP complex members RUVBL1, RUVBL2, RPAP3 and PIH1D1, URI complex members PFDN2, PFDN6, PDRG1, UXT and URI1 as well as ASDURF, POLR2E and DNAAF10/WDR92.

The protein resides in the cytoplasm. In terms of biological role, may play a role in chaperone-mediated protein folding. In Mus musculus (Mouse), this protein is p53 and DNA damage-regulated protein 1 (Pdrg1).